The following is a 184-amino-acid chain: ATP synthase subunit b, chloroplastic (184 aa).

The chain crosses the membrane as a helical span at residues 31–53 (LINLGIVISLLIYFGKGVLSNLL).

Belongs to the ATPase B chain family. As to quaternary structure, F-type ATPases have 2 components, F(1) - the catalytic core - and F(0) - the membrane proton channel. F(1) has five subunits: alpha(3), beta(3), gamma(1), delta(1), epsilon(1). F(0) has four main subunits: a(1), b(1), b'(1) and c(10-14). The alpha and beta chains form an alternating ring which encloses part of the gamma chain. F(1) is attached to F(0) by a central stalk formed by the gamma and epsilon chains, while a peripheral stalk is formed by the delta, b and b' chains.

It is found in the plastid. The protein localises to the chloroplast thylakoid membrane. Its function is as follows. F(1)F(0) ATP synthase produces ATP from ADP in the presence of a proton or sodium gradient. F-type ATPases consist of two structural domains, F(1) containing the extramembraneous catalytic core and F(0) containing the membrane proton channel, linked together by a central stalk and a peripheral stalk. During catalysis, ATP synthesis in the catalytic domain of F(1) is coupled via a rotary mechanism of the central stalk subunits to proton translocation. In terms of biological role, component of the F(0) channel, it forms part of the peripheral stalk, linking F(1) to F(0). The chain is ATP synthase subunit b, chloroplastic from Aneura mirabilis (Parasitic liverwort).